Here is a 300-residue protein sequence, read N- to C-terminus: Putative lysophosphatidic acid:oleoyl-CoA acyltransferase (300 aa).

The helical transmembrane segment at 32-52 (WILIVVVMILRVPLCIISVTL) threads the bilayer. The short motif at 115–120 (HSSPLD) is the HXXXXD motif element.

Belongs to the 1-acyl-sn-glycerol-3-phosphate acyltransferase family.

The protein localises to the lipid droplet. It is found in the endoplasmic reticulum membrane. The protein resides in the golgi apparatus membrane. It carries out the reaction a 1-acyl-sn-glycero-3-phosphate + an acyl-CoA = a 1,2-diacyl-sn-glycero-3-phosphate + CoA. In terms of biological role, acyl-CoA-dependent lysophosphatidic acid acyltransferase with preference for oleoyl-CoA. Involved in triacylglyceride homeostasis and lipid droplet formation. Involved in vacuolar protein sorting. The chain is Putative lysophosphatidic acid:oleoyl-CoA acyltransferase (vps66) from Schizosaccharomyces pombe (strain 972 / ATCC 24843) (Fission yeast).